The chain runs to 297 residues: Homoserine kinase (297 aa).

Residue 82-92 (PLTRGLGSSAS) coordinates ATP.

It belongs to the GHMP kinase family. Homoserine kinase subfamily.

It is found in the cytoplasm. The catalysed reaction is L-homoserine + ATP = O-phospho-L-homoserine + ADP + H(+). Its pathway is amino-acid biosynthesis; L-threonine biosynthesis; L-threonine from L-aspartate: step 4/5. Functionally, catalyzes the ATP-dependent phosphorylation of L-homoserine to L-homoserine phosphate. The chain is Homoserine kinase from Bacillus cereus (strain AH187).